The primary structure comprises 329 residues: Vanillate O-demethylase oxygenase subunit (329 aa).

The Rieske domain maps to M1–V84. The [2Fe-2S] cluster site is built by C24, H26, C43, and H46.

Belongs to the bacterial ring-hydroxylating dioxygenase alpha subunit family. In terms of assembly, this demethylase system consists of two proteins: an oxygenase and an oxygenase reductase. It depends on [2Fe-2S] cluster as a cofactor. The cofactor is Fe cation.

The catalysed reaction is vanillate + NADH + O2 + H(+) = 3,4-dihydroxybenzoate + formaldehyde + NAD(+) + H2O. Its pathway is xenobiotic degradation; vanillyl-alcohol degradation. The polypeptide is Vanillate O-demethylase oxygenase subunit (vanA) (Pseudomonas sp. (strain ATCC 19151)).